A 346-amino-acid chain; its full sequence is Biotin synthase (346 aa).

A Radical SAM core domain is found at 38-256 (RQVQVSTLLS…IAVARIMMPT (219 aa)). Residues Cys53, Cys57, and Cys60 each contribute to the [4Fe-4S] cluster site. Residues Cys97, Cys128, Cys188, and Arg260 each contribute to the [2Fe-2S] cluster site.

The protein belongs to the radical SAM superfamily. Biotin synthase family. As to quaternary structure, homodimer. [4Fe-4S] cluster serves as cofactor. Requires [2Fe-2S] cluster as cofactor.

The catalysed reaction is (4R,5S)-dethiobiotin + (sulfur carrier)-SH + 2 reduced [2Fe-2S]-[ferredoxin] + 2 S-adenosyl-L-methionine = (sulfur carrier)-H + biotin + 2 5'-deoxyadenosine + 2 L-methionine + 2 oxidized [2Fe-2S]-[ferredoxin]. The protein operates within cofactor biosynthesis; biotin biosynthesis; biotin from 7,8-diaminononanoate: step 2/2. Functionally, catalyzes the conversion of dethiobiotin (DTB) to biotin by the insertion of a sulfur atom into dethiobiotin via a radical-based mechanism. This is Biotin synthase from Escherichia fergusonii (strain ATCC 35469 / DSM 13698 / CCUG 18766 / IAM 14443 / JCM 21226 / LMG 7866 / NBRC 102419 / NCTC 12128 / CDC 0568-73).